The sequence spans 274 residues: Energy-coupling factor transporter ATP-binding protein EcfA1 (274 aa).

Positions 11–245 (IELKNVKFKY…ERVIEIAKID (235 aa)) constitute an ABC transporter domain. 45–52 (GHNGSGKS) lines the ATP pocket.

This sequence belongs to the ABC transporter superfamily. Energy-coupling factor EcfA family. Forms a stable energy-coupling factor (ECF) transporter complex composed of 2 membrane-embedded substrate-binding proteins (S component), 2 ATP-binding proteins (A component) and 2 transmembrane proteins (T component).

It is found in the cell membrane. In terms of biological role, ATP-binding (A) component of a common energy-coupling factor (ECF) ABC-transporter complex. Unlike classic ABC transporters this ECF transporter provides the energy necessary to transport a number of different substrates. This chain is Energy-coupling factor transporter ATP-binding protein EcfA1, found in Mycoplasma mobile (strain ATCC 43663 / 163K / NCTC 11711) (Mesomycoplasma mobile).